The primary structure comprises 380 residues: Acyl-coenzyme A diphosphatase NUDT19 (380 aa).

Residues 8 to 264 (WKEAATLIVA…KIWIPPPQFY (257 aa)) enclose the Nudix hydrolase domain. Positions 115-136 (SLIPGEVATRICAIRETFEESG) match the Nudix box motif. Mg(2+) contacts are provided by E130 and E134. Residues 378-380 (NKL) carry the Microbody targeting signal motif.

Belongs to the Nudix hydrolase family. Monomer. It depends on Mg(2+) as a cofactor. Requires Mn(2+) as cofactor.

The protein resides in the peroxisome. The catalysed reaction is an acyl-CoA + H2O = an acyl-4'-phosphopantetheine + adenosine 3',5'-bisphosphate + 2 H(+). It carries out the reaction CoA + H2O = (R)-4'-phosphopantetheine + adenosine 3',5'-bisphosphate + 2 H(+). The enzyme catalyses hexanoyl-CoA + H2O = hexanoyl-4'-phosphopantetheine + adenosine 3',5'-bisphosphate + 2 H(+). It catalyses the reaction octanoyl-CoA + H2O = S-octanoyl-4'-phosphopantetheine + adenosine 3',5'-bisphosphate + 2 H(+). The catalysed reaction is butanoyl-CoA + H2O = S-butanoyl-4'-phosphopantetheine + adenosine 3',5'-bisphosphate + 2 H(+). It carries out the reaction propanoyl-CoA + H2O = propanoyl-4'-phosphopantetheine + adenosine 3',5'-bisphosphate + 2 H(+). The enzyme catalyses malonyl-CoA + H2O = malonyl-4'-phosphopantetheine + adenosine 3',5'-bisphosphate + 2 H(+). It catalyses the reaction succinyl-CoA + H2O = succinyl-4'-phosphopantetheine + adenosine 3',5'-bisphosphate + 2 H(+). The catalysed reaction is choloyl-CoA + H2O = S-choloyl-4'-phosphopantetheine + adenosine 3',5'-bisphosphate + 2 H(+). It carries out the reaction 4,8-dimethylnonanoyl-CoA + H2O = S-(4,8-dimethylnonanoyl)-4'-phosphopantetheine + adenosine 3',5'-bisphosphate + 2 H(+). The enzyme catalyses (9Z,12Z,15Z)-octadecatrienoyl-CoA + H2O = S-(9Z,12Z,15Z-octadecatrienoyl)-4'-phosphopantetheine + adenosine 3',5'-bisphosphate + 2 H(+). It catalyses the reaction (9Z,12Z)-octadecadienoyl-CoA + H2O = S-(9Z,12Z-octadecadienoyl)-4'-phosphopantetheine + adenosine 3',5'-bisphosphate + 2 H(+). The catalysed reaction is (9Z)-hexadecenoyl-CoA + H2O = S-(9Z-hexadecenoyl)-4'-phosphopantetheine + adenosine 3',5'-bisphosphate + 2 H(+). It carries out the reaction (9Z)-tetradecenoyl-CoA + H2O = S-(9Z-tetradecenoyl)-4'-phosphopantetheine + adenosine 3',5'-bisphosphate + 2 H(+). The enzyme catalyses (6Z)-octenoyl-CoA + H2O = S-(6Z-octenoyl)-4'-phosphopantetheine + adenosine 3',5'-bisphosphate + 2 H(+). It catalyses the reaction hexadecanoyl-CoA + H2O = S-hexadecanoyl-4'-phosphopantetheine + adenosine 3',5'-bisphosphate + 2 H(+). The catalysed reaction is tetradecanoyl-CoA + H2O = tetradecanoyl-4'-phosphopantetheine + adenosine 3',5'-bisphosphate + 2 H(+). It carries out the reaction dodecanoyl-CoA + H2O = S-dodecanoyl-4'-phosphopantetheine + adenosine 3',5'-bisphosphate + 2 H(+). The enzyme catalyses a 5'-end CoA-ribonucleoside in mRNA + H2O = a 5'-end phospho-adenosine-phospho-ribonucleoside in mRNA + (R)-4'-phosphopantetheine + 2 H(+). Functionally, fatty acyl-coenzyme A (CoA) diphosphatase that hydrolyzes fatty acyl-CoA to yield acyl-4'-phosphopantetheine and adenosine 3',5'-bisphosphate. Mediates the hydrolysis of a wide range of CoA esters, including choloyl-CoA and branched-chain fatty-acyl-CoA esters and at low substrate concentrations medium and long-chain fatty-acyl-CoA esters are the primary substrates. Highest activity seen with medium-chain acyl-CoA esters and higher rates of activity seen with the unsaturated acyl-CoA esters compared with the saturated esters. Exhibits decapping activity towards dpCoA-capped RNAs in vitro. The polypeptide is Acyl-coenzyme A diphosphatase NUDT19 (nudt19) (Xenopus laevis (African clawed frog)).